Consider the following 194-residue polypeptide: Adenylate kinase (194 aa).

10–15 is a binding site for ATP; the sequence is GAGKGT. The interval 30–59 is NMP; it reads STGDMLRAAVAQQSEIGKRAKAVMDAGQLV. AMP contacts are provided by residues Thr-31, Arg-36, 57–59, 85–88, and Gln-92; these read QLV and GYPR. The tract at residues 126-142 is LID; the sequence is SRVAETIAKGGQVRSDD. Arg-127 contributes to the ATP binding site. AMP-binding residues include Arg-139 and Arg-150. Ala-178 contributes to the ATP binding site.

This sequence belongs to the adenylate kinase family. Monomer.

The protein resides in the cytoplasm. The catalysed reaction is AMP + ATP = 2 ADP. It functions in the pathway purine metabolism; AMP biosynthesis via salvage pathway; AMP from ADP: step 1/1. Catalyzes the reversible transfer of the terminal phosphate group between ATP and AMP. Plays an important role in cellular energy homeostasis and in adenine nucleotide metabolism. This Brucella canis (strain ATCC 23365 / NCTC 10854 / RM-666) protein is Adenylate kinase.